Reading from the N-terminus, the 837-residue chain is Exonuclease 1 (837 aa).

An N-domain region spans residues 1 to 99; that stretch reads MGIQGLLQFI…RSRRERRQSN (99 aa). Mg(2+)-binding residues include D30, D78, E150, D152, D171, D173, and D225. Residues 129-386 form an interaction with MSH3 region; that stretch reads MAHKVIKAAR…RLEVNSVSHA (258 aa). Positions 138–229 are I-domain; the sequence is RALGVDCLVA…ILSGCDYLAS (92 aa). Disordered regions lie at residues 345–367 and 440–477; these read TMPA…PGTN and IKEN…PSKM. An interaction with MLH1 region spans residues 387-488; the sequence is PQLKEKPSTL…NKFATFLQRR (102 aa). The segment covering 449–462 has biased composition (polar residues); sequence TSPNSSKMSKSCPD. Residue K480 is modified to N6-acetyllysine. The segment at 555 to 589 is disordered; it reads NGTHNLSSQIPGNAAVSPEDEAQSSETSKLLGAMS. The segment covering 556–565 has biased composition (polar residues); that stretch reads GTHNLSSQIP. 2 positions are modified to phosphoserine: S589 and S601. The interaction with MSH2 stretch occupies residues 591–837; sequence PSLGTLRSCF…CVRAQRAIFH (247 aa). The tract at residues 608–740 is disordered; it reads EFSRTPSPSA…GLCRSSSMDS (133 aa). Composition is skewed to polar residues over residues 611 to 623, 665 to 690, and 699 to 713; these read RTPS…TLQQ, SSRS…SSRD, and NNKS…NSKQ. Residue T612 is modified to Phosphothreonine. Residues S614 and S666 each carry the phosphoserine modification. S737 bears the Phosphoserine mark. Positions 778-837 are interaction with MLH1; it reads LQTKISELWKNFGFKKDSEKLPSCKKPLSPVKDNIQLTPETEDEIFNKPECVRAQRAIFH.

It belongs to the XPG/RAD2 endonuclease family. EXO1 subfamily. As to quaternary structure, interacts with the MLH1-PMS2 heterodimer via MLH1. Interacts with MSH3. Interacts with the MSH2-MSH6 heterodimer via MSH2, and this interaction may increase the processivity of the 5'-&gt;3' exonuclease activity. Interacts with PCNA, and this interaction may both stimulate the cryptic 3'-&gt;5' exonuclease activity and suppress the 5'-&gt;3' exonuclease activity. Interacts with WRN, and this interaction stimulates both the 5'-&gt;3' exonuclease activity and cleavage of 5'-overhanging flap structures. Interacts with RECQL/RECQ1, and this interaction stimulates cleavage of 5'-overhanging flap structures. Interacts with DNA helicase ZGRF1; the interaction is increased following DNA damage induction. The cofactor is Mg(2+). Post-translationally, phosphorylated upon DNA damage and in response to agents stalling DNA replication, probably by ATM or ATR. Highly expressed in the spleen and testis. Also expressed in the bone marrow, brain, lung, lymph node and thymus.

The protein resides in the nucleus. In terms of biological role, 5'-&gt;3' double-stranded DNA exonuclease which may also possess a cryptic 3'-&gt;5' double-stranded DNA exonuclease activity. Functions in DNA mismatch repair (MMR) to excise mismatch-containing DNA tracts directed by strand breaks located either 5' or 3' to the mismatch. Also exhibits endonuclease activity against 5'-overhanging flap structures similar to those generated by displacement synthesis when DNA polymerase encounters the 5'-end of a downstream Okazaki fragment. Required for somatic hypermutation (SHM) and class switch recombination (CSR) of immunoglobulin genes. Essential for male and female meiosis. The protein is Exonuclease 1 (Exo1) of Mus musculus (Mouse).